Consider the following 526-residue polypeptide: ATP-dependent RNA helicase DBP3 (526 aa).

Residues 1–33 (MVEEHKNKKRRQEDGPADVPEKKVKVSKSEKKD) show a composition bias toward basic and acidic residues. Residues 1 to 86 (MVEEHKNKKR…SSQGYTQSES (86 aa)) form a disordered region. Residues 34 to 65 (KKEKKEKKEKKEKKEKKEKKEKKEKKEKKKKY) show a composition bias toward basic residues. Polar residues predominate over residues 69–86 (ATISGSAQSSQGYTQSES). A Q motif motif is present at residues 118–144 (LSFDQIQLNSKISAVVNKFPTPTPIQS). The 172-residue stretch at 147 to 318 (WPYLLSGKDV…STFMNQPVKV (172 aa)) folds into the Helicase ATP-binding domain. Residue 160–167 (AETGSGKT) coordinates ATP. The DEAD box motif lies at 265–268 (DEAD). In terms of domain architecture, Helicase C-terminal spans 334-496 (QIVEVIEPFD…PVPDELLKFG (163 aa)).

The protein belongs to the DEAD box helicase family. DDX5/DBP2 subfamily.

Its subcellular location is the nucleus. The protein localises to the nucleolus. It carries out the reaction ATP + H2O = ADP + phosphate + H(+). Functionally, ATP-dependent RNA helicase required for 60S ribosomal subunit synthesis. Involved in efficient pre-rRNA processing, predominantly at site A3, which is necessary for the normal formation of 25S and 5.8S rRNAs. In Scheffersomyces stipitis (strain ATCC 58785 / CBS 6054 / NBRC 10063 / NRRL Y-11545) (Yeast), this protein is ATP-dependent RNA helicase DBP3 (DBP3).